We begin with the raw amino-acid sequence, 142 residues long: Crustacean hyperglycemic hormones (142 aa).

A signal peptide spans 1 to 26; that stretch reads MYSKTIPAMLAIITVAYLCALPHAHA. Q67 bears the Pyrrolidone carboxylic acid; partial mark. 3 disulfides stabilise this stretch: C73–C109, C89–C105, and C92–C118. At V138 the chain carries Valine amide.

The protein belongs to the arthropod CHH/MIH/GIH/VIH hormone family. Post-translationally, the N-terminus is blocked only in isoform CHH-II but not in isoform CHH-I. Produced by the medulla terminalis X-organ in the eyestalks and transported to the sinus gland where they are stored and released.

It localises to the secreted. Hormone found in the sinus gland of isopods and decapods which controls the blood sugar level. Has a secretagogue action over the amylase released from the midgut gland. May act as a stress hormone and may be involved in the control of molting and reproduction. The polypeptide is Crustacean hyperglycemic hormones (Carcinus maenas (Common shore crab)).